The following is a 99-amino-acid chain: Integration host factor subunit alpha (99 aa).

A disordered region spans residues 49-71 (FGNFDLRDKNQRPGRNPKTGEDI).

The protein belongs to the bacterial histone-like protein family. Heterodimer of an alpha and a beta chain.

This protein is one of the two subunits of integration host factor, a specific DNA-binding protein that functions in genetic recombination as well as in transcriptional and translational control. The protein is Integration host factor subunit alpha of Shewanella denitrificans (strain OS217 / ATCC BAA-1090 / DSM 15013).